The sequence spans 220 residues: Redox-sensing transcriptional repressor Rex (220 aa).

The segment at residues 16 to 55 (MYVQVLETLKREGSQVVSSELLARTCSVNPSQIRKDLAYF) is a DNA-binding region (H-T-H motif). Residue 90-95 (GIGNLG) coordinates NAD(+).

Belongs to the transcriptional regulatory Rex family. Homodimer.

Its subcellular location is the cytoplasm. Functionally, modulates transcription in response to changes in cellular NADH/NAD(+) redox state. The protein is Redox-sensing transcriptional repressor Rex of Solidesulfovibrio magneticus (strain ATCC 700980 / DSM 13731 / RS-1) (Desulfovibrio magneticus).